The following is a 392-amino-acid chain: Multidrug resistance protein MdtL (392 aa).

Helical transmembrane passes span 4 to 24 (FLLC…MYLV), 38 to 58 (AQLH…MLFA), 70 to 90 (VAIV…QAHA), 95 to 115 (LVGR…AFAI), 131 to 151 (LLNG…HLIM), 158 to 178 (SLFY…VFIL), 209 to 229 (ILIT…SPVL), 246 to 266 (ALMA…LSLF), 270 to 290 (TLML…SLAT), 294 to 314 (LTLI…GVAM), 331 to 351 (VLGI…AIIG), and 357 to 377 (MLIG…LVVT).

It belongs to the major facilitator superfamily. DHA1 family. MdtL (TC 2.A.1.2.22) subfamily.

It localises to the cell inner membrane. The protein is Multidrug resistance protein MdtL of Klebsiella pneumoniae (strain 342).